Reading from the N-terminus, the 7059-residue chain is Replicase polyprotein 1ab (7059 aa).

The CoV Nsp1 globular domain occupies 54 to 196; the sequence is PENHVMVDCR…PWVMYLRKCG (143 aa). In terms of domain architecture, BetaCoV Nsp1 C-terminal spans 216-246; it reads FKVEDAYDLVHDEPKGKFSKKAYALIRGYRG. The region spanning 250–519 is the CoV Nsp2 N-terminal domain; that stretch reads LLYVDQYGCD…LICKALYLDY (270 aa). Residues C392, C397, C413, and C416 each contribute to the Zn(2+) site. Residues 392-416 are C4; sequence CEQDLCDFKGWVPGNMIDGFACTTC. The CoV Nsp2 middle domain occupies 524-713; that stretch reads CGNLHQRELL…AQAFRSGAKV (190 aa). In terms of domain architecture, CoV Nsp2 C-terminal spans 733 to 851; sequence RRRICLSGSK…LDQAWRVPCA (119 aa). The region spanning 853 to 966 is the Ubiquitin-like 1 domain; it reads RCVTFKEQPT…LYCAFTAPED (114 aa). Acidic residues predominate over residues 972–986; it reads ESGVEEDDVEGEETD. The disordered stretch occupies residues 972-1000; that stretch reads ESGVEEDDVEGEETDLTVTSAGEPCVASE. The region spanning 1036 to 1274 is the Peptidase C16 1 domain; that stretch reads DLESVIQDYE…IAQLYGSCIT (239 aa). The For PL1-PRO activity role is filled by C1074. Positions 1151, 1154, 1177, and 1179 each coordinate Zn(2+). A C4-type 1 zinc finger spans residues 1151–1179; the sequence is CIKCDLALKLKGLDAMFFYGDVVSHVCKC. Active-site for PL1-PRO activity residues include H1225 and D1236. In terms of domain architecture, Macro spans 1275–1435; sequence PNVCFVKGDI…LISKCQITAV (161 aa). Residues 1491–1563 form the DPUP domain; the sequence is DDARTFVQSN…VAQIKALFLD (73 aa). The region spanning 1562-1617 is the Ubiquitin-like 2 domain; it reads LDKVDILLTVDGVNFTNRFVPVGESFGKSLGNVFCDGVNVTKHKCDINYKGKVFFQ. The Peptidase C16 2 domain occupies 1631–1892; that stretch reads SSFNFDQKEL…KIEYKPDLSQ (262 aa). Catalysis depends on C1671, which acts as the For PL2-PRO activity. Residues C1749, C1751, C1783, and C1785 each contribute to the Zn(2+) site. Residues 1749-1785 form a C4-type 2 zinc finger; that stretch reads CKCGVKQEQRTGVDAVMHFGTLSREDLEIGYTVDCSC. Catalysis depends on for PL2-PRO activity residues H1828 and D1842. One can recognise a Nucleic acid-binding domain in the interval 1906–2007; the sequence is IKAQFKTFEK…TYFNRPLLVD (102 aa). The region spanning 2020 to 2169 is the G2M domain; that stretch reads DDGGDISESD…ADNKVIYTTE (150 aa). 3 helical membrane passes run 2138–2158, 2199–2219, and 2221–2241; these read ISAC…WIKI, ACII…NVIF, and DFYL…VQWI. The interval 2138 to 2385 is HD1; that stretch reads ISACFNFIKW…ASFIKLFSLF (248 aa). The 62-residue stretch at 2235 to 2296 folds into the 3Ecto domain; sequence GKIVQWIKNT…AIDVVQYEAD (62 aa). Cystine bridges form between C2251–C2275 and C2266–C2272. 3 consecutive transmembrane segments (helical) span residues 2313-2333, 2343-2363, and 2365-2385; these read LIVS…LISI, LLML…ANML, and AHVF…FSLF. A Y1 region spans residues 2383–2473; the sequence is SLFRHVAYGC…ELKRPIQPTD (91 aa). Positions 2383-2750 constitute a CoV Nsp3 Y domain; that stretch reads SLFRHVAYGC…LTTPFSLKGG (368 aa). Zn(2+)-binding residues include H2387, C2392, C2397, C2400, C2433, H2436, C2440, and C2443. Positions 2387 to 2400 are ZF1; that stretch reads HVAYGCSKSGCLFC. Positions 2433–2443 are ZF2; that stretch reads CSKHQWNCIDC. The interval 2474-2566 is Y2; it reads VAYHTVTDVK…MVDKILITTA (93 aa). The coV-Y stretch occupies residues 2474-2750; the sequence is VAYHTVTDVK…LTTPFSLKGG (277 aa). The tract at residues 2567–2649 is Y3; the sequence is NTGTSVTETM…DSVMSAVSAG (83 aa). The Y4 stretch occupies residues 2650 to 2750; sequence LELTDESCNN…LTTPFSLKGG (101 aa). The next 7 helical transmembrane spans lie at 2752–2772, 2824–2844, 3009–3029, 3031–3051, 3063–3083, 3090–3110, and 3115–3135; these read VFSY…IGLW, STFG…VAVV, VFDL…FLAL, ASSI…YYLI, IVFV…VFQV, VYAI…SVIM, and LVMY…SVVV. An HD2 region spans residues 2752–3135; that stretch reads VFSYFVYVCF…FCLLYISVVV (384 aa). Residues 3149 to 3246 form the Nsp4C domain; the sequence is LGTSVRSDGT…TASVSTSFLQ (98 aa). A Peptidase C30 domain is found at 3247-3549; it reads SGIVKMVNPT…YQQLAGIKLQ (303 aa). Active-site for 3CL-PRO activity residues include H3287 and C3391. Residues 3319-3775 form an HD3 region; sequence LSLTVMSYQM…IISCYWGLFS (457 aa). A run of 7 helical transmembrane segments spans residues 3558 to 3578, 3588 to 3608, 3615 to 3635, 3657 to 3677, 3684 to 3704, 3711 to 3731, and 3755 to 3775; these read GIVC…TAFV, TNML…MLLV, LTMY…LVVY, TYTD…FVTL, LFSF…WYMG, ILLM…LSMA, and IVLV…GLFS. Positions 3837–3925 constitute a RdRp Nsp7 cofactor domain; that stretch reads SKLTDVKCAN…DYAKDNTVLQ (89 aa). The RdRp Nsp8 cofactor domain maps to 3926–4122; that stretch reads ALQSEFVNMA…HNEVSATVLQ (197 aa). Residues 4123-4232 form the Nsp9 ssRNA-binding domain; sequence NNELMPAKLK…GTISSTVRLQ (110 aa). One can recognise an ExoN/MTase coactivator domain in the interval 4233–4370; that stretch reads AGTATEYASN…CVSTDTTVQS (138 aa). 8 residues coordinate Zn(2+): C4306, C4309, H4315, C4322, C4348, C4351, C4359, and C4361. 2 zinc fingers span residues 4306 to 4322 and 4348 to 4361; these read CIYC…DGLC and CQVC…SCSC. Residues 4375-4630 form the NiRAN domain; it reads FLNRVRGTSV…DCELYVNNAY (256 aa). The Mn(2+) site is built by N4578 and D4587. Residues 4631 to 4729 enclose the Nsp12 Interface domain; it reads RLFDLVQYDF…MNMDVDTHRY (99 aa). 5 residues coordinate Zn(2+): H4660, C4666, C4671, C4675, and C4852. The Nsp12 RNA-dependent RNA polymerase domain maps to 4730-5297; the sequence is RLSLKDLLLY…NMYLRSAVMQ (568 aa). The interval 4732–4946 is rdRp Fingers N-ter; it reads SLKDLLLYAA…HQKCLKSIAA (215 aa). The tract at residues 4947 to 4985 is rdRp Palm N-ter; it reads TRGVPVVIGTTKFYGGWDDMLRRLIKDVDNPVLMGWDYP. A RdRp catalytic domain is found at 4977-5139; sequence PVLMGWDYPK…CYNSDYASKG (163 aa). The interval 4986–5044 is rdRp Fingers C-ter; it reads KCDRAMPNILRIVSSLVLARKHEACCSQSDRFYRLANECAQVLSEIVMCGGCYYVKPGG. Positions 5007, 5010, and 5011 each coordinate Zn(2+). The interval 5045 to 5180 is rdRp Palm C-ter; it reads TSSGDATTAF…NNGPHEFCSQ (136 aa). Active-site residues include S5124, D5125, and D5126. The rdRp Thumb stretch occupies residues 5181–5297; it reads HTMLVKMDGD…NMYLRSAVMQ (117 aa). A CV ZBD domain is found at 5298-5410; sequence SVGACVVCSS…DDFNRIASCK (113 aa). Residues C5302, C5305, C5313, C5316, C5323, C5326, H5330, H5336, C5347, C5352, C5369, and H5372 each contribute to the Zn(2+) site. One can recognise a (+)RNA virus helicase ATP-binding domain in the interval 5553-5734; the sequence is SVLETFQNNV…MCCLGPDIFL (182 aa). 5578–5585 provides a ligand contact to ATP; that stretch reads GPPGTGKS. Residues 5735-5904 enclose the (+)RNA virus helicase C-terminal domain; the sequence is GTCYRCPKEI…VETRVQCSTN (170 aa). One can recognise an ExoN domain in the interval 5971–6186; sequence LFITKEEAVK…RCLAVYDCFC (216 aa). Active-site residues include D5989, E5991, and E6090. Zn(2+) contacts are provided by H6156, C6160, and H6163. Active-site residues include H6167 and D6172. A Zn(2+)-binding site is contributed by C6178. The N7-MTase domain occupies 6195–6421; the sequence is YPIISNELSI…NLWNTFTKLQ (227 aa). 6230 to 6236 is an S-adenosyl-L-methionine binding site; that stretch reads DIGNPKA. The gpppA-binding stretch occupies residues 6308–6322; sequence CNGGSLYVNKHAFHT. 4 residues coordinate Zn(2+): C6346, C6367, C6378, and H6381. The Nsp15 N-terminal oligomerization domain occupies 6422–6482; the sequence is SLENVVYNLV…NVAVELFAKR (61 aa). Positions 6483-6603 constitute an AV-Nsp11N/CoV-Nsp15M domain; the sequence is SIRHHPELKL…FAVRKEGQDV (121 aa). Positions 6653–6792 constitute a NendoU domain; it reads TCRTDMEKDF…NDEKVMTFYP (140 aa). Catalysis depends on residues H6683, H6698, K6738, K6841, D6935, K6971, and E7004. A Nidovirus-type SAM-dependent 2'-O-MTase domain is found at 6797 to 7059; that stretch reads ASDWKPGYSM…NSRLSWLVMP (263 aa).

It belongs to the coronaviruses polyprotein 1ab family. Interacts with host PHB and PHB2. In terms of assembly, interacts with papain-like protease nsp3 and non-structural protein 6. As to quaternary structure, monomer. Homodimer. Only the homodimer shows catalytic activity. Interacts with nsp8 and nsp12 to form the replication-transcription complex (RTC): nsp12, nsp7, two subunits of nsp8, and up to two subunits of nsp13. In terms of assembly, interacts with nsp7, nsp13 and nsp12 to form the replication-transcription complex (RTC): nsp12, nsp7, two subunits of nsp8, and up to two subunits of nsp13. As to quaternary structure, interacts with nsp12. Interacts with proofreading exoribonuclease nsp14 and 2'-O-methyltransferase nsp16; these interactions enhance nsp14 and nsp16 enzymatic activities. In terms of assembly, interacts with nsp7 and nsp8 to form the replication-transcription complex (RTC): nsp12, nsp7, two subunits of nsp8, and up to two subunits of nsp13. Interacts with nsp9. As to quaternary structure, interacts with nsp8 to form the replication-transcription complex (RTC): nsp12, nsp7, two subunits of nsp8, and up to two subunits of nsp13. Requires Mn(2+) as cofactor. Mg(2+) serves as cofactor. Specific enzymatic cleavages in vivo by its own proteases yield mature proteins. 3CL-PRO and PL-PRO proteinases are autocatalytically processed.

Its subcellular location is the host membrane. The protein resides in the host cytoplasm. The protein localises to the host perinuclear region. It is found in the host endoplasmic reticulum-Golgi intermediate compartment. It carries out the reaction RNA(n) + a ribonucleoside 5'-triphosphate = RNA(n+1) + diphosphate. It catalyses the reaction ATP + H2O = ADP + phosphate + H(+). The enzyme catalyses Thiol-dependent hydrolysis of ester, thioester, amide, peptide and isopeptide bonds formed by the C-terminal Gly of ubiquitin (a 76-residue protein attached to proteins as an intracellular targeting signal).. The catalysed reaction is a 5'-end (N(7)-methyl 5'-triphosphoguanosine)-ribonucleoside in mRNA + S-adenosyl-L-methionine = a 5'-end (N(7)-methyl 5'-triphosphoguanosine)-(2'-O-methyl-ribonucleoside) in mRNA + S-adenosyl-L-homocysteine + H(+). It carries out the reaction uridylyl-uridylyl-ribonucleotide-RNA = a 3'-end uridylyl-2',3'-cyclophospho-uridine-RNA + a 5'-end dephospho-ribonucleoside-RNA. It catalyses the reaction a 5'-end diphospho-ribonucleoside in mRNA + GTP + H(+) = a 5'-end (5'-triphosphoguanosine)-ribonucleoside in mRNA + diphosphate. The enzyme catalyses a 5'-end (5'-triphosphoguanosine)-ribonucleoside in mRNA + S-adenosyl-L-methionine = a 5'-end (N(7)-methyl 5'-triphosphoguanosine)-ribonucleoside in mRNA + S-adenosyl-L-homocysteine. The replicase polyprotein of coronaviruses is a multifunctional protein: it contains the activities necessary for the transcription of negative stranded RNA, leader RNA, subgenomic mRNAs and progeny virion RNA as well as proteinases responsible for the cleavage of the polyprotein into functional products. Functionally, inhibits host translation by interacting with the 40S ribosomal subunit. The nsp1-40S ribosome complex further induces an endonucleolytic cleavage near the 5'UTR of host mRNAs, targeting them for degradation. Viral mRNAs are not susceptible to nsp1-mediated endonucleolytic RNA cleavage thanks to the presence of a 5'-end leader sequence and are therefore protected from degradation. By suppressing host gene expression, nsp1 facilitates efficient viral gene expression in infected cells and evasion from host immune response. In terms of biological role, may play a role in the modulation of host cell survival signaling pathway by interacting with host PHB and PHB2. Indeed, these two proteins play a role in maintaining the functional integrity of the mitochondria and protecting cells from various stresses. Its function is as follows. Responsible for the cleavages located at the N-terminus of the replicase polyprotein. In addition, PL-PRO possesses a deubiquitinating/deISGylating activity and processes both 'Lys-48'- and 'Lys-63'-linked polyubiquitin chains from cellular substrates. Participates together with nsp4 in the assembly of virally-induced cytoplasmic double-membrane vesicles necessary for viral replication. Antagonizes innate immune induction of type I interferon by blocking the phosphorylation, dimerization and subsequent nuclear translocation of host IRF3. Also prevents host NF-kappa-B signaling. Participates in the assembly of virally-induced cytoplasmic double-membrane vesicles necessary for viral replication. Functionally, cleaves the C-terminus of replicase polyprotein at 11 sites. Recognizes substrates containing the core sequence [ILMVF]-Q-|-[SGACN]. Also able to bind an ADP-ribose-1''-phosphate (ADRP). In terms of biological role, plays a role in the initial induction of autophagosomes from host endoplasmic reticulum. Later, limits the expansion of these phagosomes that are no longer able to deliver viral components to lysosomes. Its function is as follows. Forms a hexadecamer with nsp8 (8 subunits of each) that may participate in viral replication by acting as a primase. Alternatively, may synthesize substantially longer products than oligonucleotide primers. Forms a hexadecamer with nsp7 (8 subunits of each) that may participate in viral replication by acting as a primase. Alternatively, may synthesize substantially longer products than oligonucleotide primers. Functionally, forms a primer, NSP9-pU, which is utilized by the polymerase for the initiation of RNA chains. Interacts with ribosome signal recognition particle RNA (SRP). Together with NSP8, suppress protein integration into the cell membrane, thereby disrupting host immune defenses. In terms of biological role, plays a pivotal role in viral transcription by stimulating both nsp14 3'-5' exoribonuclease and nsp16 2'-O-methyltransferase activities. Therefore plays an essential role in viral mRNAs cap methylation. Its function is as follows. RNA-directed RNA polymerase that catalyzes the transcription of viral genomic and subgenomic RNAs. Acts in complex with nsp7 and nsp8 to transcribe both the minus and positive strands of genomic RNA. The kinase-like NiRAN domain of NSP12 attaches one or more nucleotides to the amino terminus of NSP9, forming a covalent RNA-protein intermediate that serves as transcription/replication primer. Subgenomic RNAs (sgRNAs) are formed by discontinuous transcription: The polymerase has the ability to pause at transcription-regulating sequences (TRS) and jump to the leader TRS, resulting in a major deletion. This creates a series of subgenomic RNAs that are replicated, transcribed and translated. In addition, Nsp12 is a subunit of the viral RNA capping enzyme that catalyzes the RNA guanylyltransferase reaction for genomic and sub-genomic RNAs. Subsequently, the NiRAN domain transfers RNA to GDP, and forms the core cap structure GpppA-RNA. Multi-functional protein with a zinc-binding domain in N-terminus displaying RNA and DNA duplex-unwinding activities with 5' to 3' polarity. Activity of helicase is dependent on magnesium. Functionally, plays a role in viral RNA synthesis through two distinct activities. The N7-guanine methyltransferase activity plays a role in the formation of the cap structure GpppA-RNA. The proofreading exoribonuclease reduces the sensitivity of the virus to RNA mutagens during replication. This activity acts on both ssRNA and dsRNA in a 3'-5' direction. In terms of biological role, plays a role in viral transcription/replication and prevents the simultaneous activation of host cell dsRNA sensors, such as MDA5/IFIH1, OAS, and PKR. Acts by degrading the 5'-polyuridines generated during replication of the poly(A) region of viral genomic and subgenomic RNAs. Catalyzes a two-step reaction in which a 2'3'-cyclic phosphate (2'3'-cP) is first generated by 2'-O transesterification, which is then hydrolyzed to a 3'-phosphate (3'-P). If not degraded, poly(U) RNA would hybridize with poly(A) RNA tails and activate host dsRNA sensors. Its function is as follows. Methyltransferase that mediates mRNA cap 2'-O-ribose methylation to the 5'-cap structure of viral mRNAs. N7-methyl guanosine cap is a prerequisite for binding of nsp16. Therefore plays an essential role in viral mRNAs cap methylation which is essential to evade immune system. This is Replicase polyprotein 1ab (rep) from Bos taurus (Bovine).